A 183-amino-acid polypeptide reads, in one-letter code: Deoxyuridine 5'-triphosphate nucleotidohydrolase (183 aa).

Substrate contacts are provided by residues 67 to 69, Asn80, 84 to 86, and Lys94; these read RSG and TID. The tract at residues 138 to 183 is disordered; that stretch reads RAEGGFGSTGGHAGLDPASGTSGQVAEGGPTGGNRYASVVSDREGQ. Residues 141 to 150 show a composition bias toward gly residues; sequence GGFGSTGGHA.

Belongs to the dUTPase family. Mg(2+) is required as a cofactor.

It catalyses the reaction dUTP + H2O = dUMP + diphosphate + H(+). Its pathway is pyrimidine metabolism; dUMP biosynthesis; dUMP from dCTP (dUTP route): step 2/2. This enzyme is involved in nucleotide metabolism: it produces dUMP, the immediate precursor of thymidine nucleotides and it decreases the intracellular concentration of dUTP so that uracil cannot be incorporated into DNA. The chain is Deoxyuridine 5'-triphosphate nucleotidohydrolase from Streptomyces coelicolor (strain ATCC BAA-471 / A3(2) / M145).